The sequence spans 31 residues: Cyclotide mech-6 (31 aa).

Residues glycine 1–asparagine 31 constitute a cross-link (cyclopeptide (Gly-Asn)). 3 disulfide bridges follow: cysteine 5/cysteine 21, cysteine 9/cysteine 23, and cysteine 14/cysteine 28.

Post-translationally, this is a cyclic peptide. In terms of processing, contains 3 disulfide bonds.

Its function is as follows. Probably participates in a plant defense mechanism (Potential). Binds to and induces leakage in phospholipd membranes, particularly ones containing 1-palmitoyl-2-oleophosphatidylethanolamine (POPE). The protein is Cyclotide mech-6 of Melicytus chathamicus (Chatham Island mahoe).